A 95-amino-acid chain; its full sequence is Phosphoribosyl-ATP pyrophosphatase (95 aa).

This sequence belongs to the PRA-PH family.

The protein localises to the cytoplasm. It carries out the reaction 1-(5-phospho-beta-D-ribosyl)-ATP + H2O = 1-(5-phospho-beta-D-ribosyl)-5'-AMP + diphosphate + H(+). It participates in amino-acid biosynthesis; L-histidine biosynthesis; L-histidine from 5-phospho-alpha-D-ribose 1-diphosphate: step 2/9. In Halobacterium salinarum (strain ATCC 29341 / DSM 671 / R1), this protein is Phosphoribosyl-ATP pyrophosphatase.